Reading from the N-terminus, the 690-residue chain is Methionine--tRNA ligase (690 aa).

A 'HIGH' region motif is present at residues 12-22; it reads PYANGPLHLGH. Zn(2+) is bound by residues C144, C147, C157, and C160. Positions 333 to 337 match the 'KMSKS' region motif; it reads QFSKS. K336 serves as a coordination point for ATP. The tRNA-binding domain maps to 535–632; the sequence is KKINIDLMVG…VNADDGSRMK (98 aa).

The protein belongs to the class-I aminoacyl-tRNA synthetase family. MetG type 1 subfamily. Homodimer. Zn(2+) is required as a cofactor.

The protein localises to the cytoplasm. The catalysed reaction is tRNA(Met) + L-methionine + ATP = L-methionyl-tRNA(Met) + AMP + diphosphate. Is required not only for elongation of protein synthesis but also for the initiation of all mRNA translation through initiator tRNA(fMet) aminoacylation. This is Methionine--tRNA ligase from Picrophilus torridus (strain ATCC 700027 / DSM 9790 / JCM 10055 / NBRC 100828 / KAW 2/3).